Consider the following 290-residue polypeptide: Diaminopimelate epimerase (290 aa).

Substrate contacts are provided by N17, Q49, and N69. The active-site Proton donor is the C78. Substrate is bound by residues 79–80, N165, N198, and 216–217; these read GN and ER. The active-site Proton acceptor is the C225. A substrate-binding site is contributed by 226-227; the sequence is GS.

It belongs to the diaminopimelate epimerase family. As to quaternary structure, homodimer.

The protein resides in the cytoplasm. It carries out the reaction (2S,6S)-2,6-diaminopimelate = meso-2,6-diaminopimelate. It participates in amino-acid biosynthesis; L-lysine biosynthesis via DAP pathway; DL-2,6-diaminopimelate from LL-2,6-diaminopimelate: step 1/1. Catalyzes the stereoinversion of LL-2,6-diaminopimelate (L,L-DAP) to meso-diaminopimelate (meso-DAP), a precursor of L-lysine and an essential component of the bacterial peptidoglycan. The protein is Diaminopimelate epimerase of Methylocella silvestris (strain DSM 15510 / CIP 108128 / LMG 27833 / NCIMB 13906 / BL2).